Reading from the N-terminus, the 196-residue chain is Putative NADH dehydrogenase/NAD(P)H nitroreductase PXO_03909 (196 aa).

Belongs to the nitroreductase family. HadB/RutE subfamily. It depends on FMN as a cofactor.

The polypeptide is Putative NADH dehydrogenase/NAD(P)H nitroreductase PXO_03909 (Xanthomonas oryzae pv. oryzae (strain PXO99A)).